The following is a 115-amino-acid chain: Large ribosomal subunit protein bL19 (115 aa).

This sequence belongs to the bacterial ribosomal protein bL19 family.

Functionally, this protein is located at the 30S-50S ribosomal subunit interface and may play a role in the structure and function of the aminoacyl-tRNA binding site. The sequence is that of Large ribosomal subunit protein bL19 from Streptococcus uberis (strain ATCC BAA-854 / 0140J).